A 486-amino-acid polypeptide reads, in one-letter code: Hydrogenobyrinate a,c-diamide synthase (486 aa).

The span at 254 to 272 (SPPPPLPVPSPGAAPPDPL) shows a compositional bias: pro residues. Residues 254-284 (SPPPPLPVPSPGAAPPDPLVRPGRPRPQAPD) form a disordered region. Residues 289–474 (RVAMASGAAF…LHTHWAAEPG (186 aa)) enclose the GATase cobBQ-type domain. Cysteine 372 serves as the catalytic Nucleophile.

This sequence belongs to the CobB/CbiA family. The cofactor is Mg(2+).

The enzyme catalyses hydrogenobyrinate + 2 L-glutamine + 2 ATP + 2 H2O = hydrogenobyrinate a,c-diamide + 2 L-glutamate + 2 ADP + 2 phosphate + 2 H(+). It functions in the pathway cofactor biosynthesis; adenosylcobalamin biosynthesis; cob(II)yrinate a,c-diamide from precorrin-2 (aerobic route): step 9/10. Catalyzes the ATP-dependent amidation of the two carboxylate groups at positions a and c of hydrogenobyrinate, using either L-glutamine or ammonia as the nitrogen source. The protein is Hydrogenobyrinate a,c-diamide synthase of Streptomyces coelicolor (strain ATCC BAA-471 / A3(2) / M145).